A 259-amino-acid chain; its full sequence is Small ribosomal subunit protein uS2 (259 aa).

It belongs to the universal ribosomal protein uS2 family.

In Streptococcus pneumoniae (strain Hungary19A-6), this protein is Small ribosomal subunit protein uS2.